Here is a 64-residue protein sequence, read N- to C-terminus: Large ribosomal subunit protein uL29 (64 aa).

It belongs to the universal ribosomal protein uL29 family.

This is Large ribosomal subunit protein uL29 from Legionella pneumophila (strain Lens).